The chain runs to 118 residues: Putative pterin-4-alpha-carbinolamine dehydratase (118 aa).

It belongs to the pterin-4-alpha-carbinolamine dehydratase family.

It carries out the reaction (4aS,6R)-4a-hydroxy-L-erythro-5,6,7,8-tetrahydrobiopterin = (6R)-L-erythro-6,7-dihydrobiopterin + H2O. This Xanthomonas euvesicatoria pv. vesicatoria (strain 85-10) (Xanthomonas campestris pv. vesicatoria) protein is Putative pterin-4-alpha-carbinolamine dehydratase.